Here is a 399-residue protein sequence, read N- to C-terminus: Nuclear hormone receptor family member nhr-125 (399 aa).

The segment at residues 10-80 (PFSCRICNQK…MGMDTTKFQY (71 aa)) is a DNA-binding region (nuclear receptor). 2 consecutive NR C4-type zinc fingers follow at residues 13-33 (CRIC…CRAC) and 50-63 (CQKG…CKRC). The NR LBD domain occupies 149-392 (QLENLTEGFK…EKLQKSQFSI (244 aa)).

Belongs to the nuclear hormone receptor family.

It is found in the nucleus. Its function is as follows. Orphan nuclear receptor. This chain is Nuclear hormone receptor family member nhr-125 (nhr-125), found in Caenorhabditis elegans.